Reading from the N-terminus, the 280-residue chain is MTQTFGENLLDAASTRGRLCVGIDPHESLLRAWGLPVDATGLAEFSRICVEAFADTVALVKPQVAFYERFGSRGFAVLEETIGTLRERGCLVVSDAKRGDIGSTMAGYATAWLDPGSPLSSDAVTVSPYLGFGSLQPVFDLAEEHGRGVFVLAATSNPEARVLQDQTDASGVSISQQIVNEAAALNAPHLAQHRAGNIGVVVGATLTDPPALSGLNGAILMPGVGTQGGTAQDVGTIAGDMAHLAFPNVSRAVLAQGPDVGNLRVAVSETAAEFPGFPRS.

The active-site Proton donor is the lysine 97.

It belongs to the OMP decarboxylase family. Type 2 subfamily.

It carries out the reaction orotidine 5'-phosphate + H(+) = UMP + CO2. It participates in pyrimidine metabolism; UMP biosynthesis via de novo pathway; UMP from orotate: step 2/2. This Corynebacterium efficiens (strain DSM 44549 / YS-314 / AJ 12310 / JCM 11189 / NBRC 100395) protein is Orotidine 5'-phosphate decarboxylase (pyrF).